Here is a 252-residue protein sequence, read N- to C-terminus: Phosphate import ATP-binding protein PstB (252 aa).

The ABC transporter domain occupies 5–247; the sequence is MRGQDVKVFY…PKEQRTQDYI (243 aa). 37 to 44 is an ATP binding site; it reads GPSGCGKS.

It belongs to the ABC transporter superfamily. Phosphate importer (TC 3.A.1.7) family. The complex is composed of two ATP-binding proteins (PstB), two transmembrane proteins (PstC and PstA) and a solute-binding protein (PstS).

The protein localises to the cell inner membrane. It carries out the reaction phosphate(out) + ATP + H2O = ADP + 2 phosphate(in) + H(+). Part of the ABC transporter complex PstSACB involved in phosphate import. Responsible for energy coupling to the transport system. This is Phosphate import ATP-binding protein PstB from Bartonella quintana (strain Toulouse) (Rochalimaea quintana).